The following is a 237-amino-acid chain: Isoprenyl transferase (237 aa).

Residue Asp14 is part of the active site. Position 14 (Asp14) interacts with Mg(2+). Residues 15–18, Trp19, Arg27, His31, and 59–61 contribute to the substrate site; these read GNGR and STE. Asn62 (proton acceptor) is an active-site residue. Substrate-binding positions include Trp63, Arg65, Arg184, and 190 to 192; that span reads RIS. Glu203 contacts Mg(2+).

The protein belongs to the UPP synthase family. In terms of assembly, homodimer. Mg(2+) serves as cofactor.

In terms of biological role, catalyzes the condensation of isopentenyl diphosphate (IPP) with allylic pyrophosphates generating different type of terpenoids. This chain is Isoprenyl transferase, found in Helicobacter hepaticus (strain ATCC 51449 / 3B1).